The following is a 256-amino-acid chain: tRNA (guanine-N(7)-)-methyltransferase (256 aa).

The span at 1–11 (MHPQDASTEQT) shows a compositional bias: polar residues. The interval 1–35 (MHPQDASTEQTPVDDDQVESSQPVHAPEDVAHPRR) is disordered. S-adenosyl-L-methionine-binding residues include Glu-85, Glu-110, Asp-137, and Asp-160. Residue Asp-160 is part of the active site. Position 164 (Lys-164) interacts with substrate. Residues 166 to 171 (RHNKRR) are interaction with RNA. Residues Asp-196 and 234–237 (TKFE) contribute to the substrate site.

It belongs to the class I-like SAM-binding methyltransferase superfamily. TrmB family.

It carries out the reaction guanosine(46) in tRNA + S-adenosyl-L-methionine = N(7)-methylguanosine(46) in tRNA + S-adenosyl-L-homocysteine. It participates in tRNA modification; N(7)-methylguanine-tRNA biosynthesis. In terms of biological role, catalyzes the formation of N(7)-methylguanine at position 46 (m7G46) in tRNA. This chain is tRNA (guanine-N(7)-)-methyltransferase, found in Cupriavidus pinatubonensis (strain JMP 134 / LMG 1197) (Cupriavidus necator (strain JMP 134)).